A 286-amino-acid chain; its full sequence is Glycine--tRNA ligase alpha subunit (286 aa).

This sequence belongs to the class-II aminoacyl-tRNA synthetase family. In terms of assembly, tetramer of two alpha and two beta subunits.

The protein localises to the cytoplasm. It catalyses the reaction tRNA(Gly) + glycine + ATP = glycyl-tRNA(Gly) + AMP + diphosphate. This Thermotoga sp. (strain RQ2) protein is Glycine--tRNA ligase alpha subunit.